A 1054-amino-acid polypeptide reads, in one-letter code: MLQKREKVLLLRTFQGRTLRIVREHYLRPSVPCNSPLCPQPATCRNDGKLLSAEVTHYVIPDWKVVQDYLEVLEFPELKGIIFMQTACQAVQHQRGRRQYNKLRNLLKDARHDCVLFANEFQQHCYLPREKGEAMEKWQTRSIYNSAVWYYHHCEDRMPIVMVTEDEEAIQQYGSETEGVFVISFKNYLDNFWPDLKAAHELCDSIIQSRRERESESQETHGKEYPEHLPLEVLEAGIKSGRYIQGILNVNKHRAQIEAFVRLQGASSKDSGLVSDILIHGSKARNRSIHGDVVVVELLPKSEWKGRTAALCENDSEDKASGESPSEPMPTGRVVGILQKNWRDYVVTFPSKEEVQSQGKNAQKILVTPWDYRIPKIRISTQQAEALQDFRVVVRIDSWETTSVYPNGHFVRVLGRIGDLEGEIATILVENSINVVPFSEAQMCEMPVNTAENPWKVSPKEEQERRDLRSTHLVFSIDPKGCEDVDDALSVRTLNNGNLELGVHIADVTHFVAPNSYIDVEARTRATTYYLADRRYDMLPSILSADLCSLLGGVDRYAVSVMWELDKTSYEIKKVWYGRTIIRSAYKLFYEAAQELLDGNFSIVDDIPEFKTLEEQNRQAKLEELVWAIGKLTDIARHIRAKRDRCGALELEGVEVRVQLDDKKNIHDLIPKQPLEVHETVAECMILANHWVAKKIWESFPHQALLRQHPPPHQEFFSELRECAKAKGFFIDTRSNKTLADSLDSANDPSDPLVNKLLRSMATQAMSNALYFSTGSCAEEEFHHYGLALDKYTHFTSPIRRYSDIVVHRLLMAAISKDKKVEIKENLFSNKNLEELCRHINNRNRAAQRSQKQSTELFQCMYFKDRDPETEERCVVDGIIYSIRTNGVLVFIPRFGIKGAAYLKNKDGLVISCGPEGSSEWKPGSLQRSQNKIISTTAGGQSVTFHLFDHVTVRISVQPSRCHSDMIRLEIVSNKPYMMPNTELCHQSSLLLKSELVKEVTRSVEEAQLAQEVKGKVIEEEHQEYRQTKGRSLYTLLEEIRDLALLDVSDSYAM.

Residues A236–E313 form the CSD1 domain. Positions E313–G332 are disordered. Residues I365 to N431 enclose the CSD2 domain. The RNB domain maps to R465–S816. Phosphoserine is present on S989.

The protein belongs to the RNR ribonuclease family. In terms of assembly, component of the RNA exosome complex. The catalytically inactive RNA exosome core (Exo-9) complex is believed to associate with catalytic subunits EXOSC10, and DIS3 or DIS3L in cytoplasmic- and nuclear-specific RNA exosome complex forms. Mg(2+) serves as cofactor.

It is found in the cytoplasm. The enzyme catalyses Exonucleolytic cleavage in the 3'- to 5'-direction to yield nucleoside 5'-phosphates.. Functionally, catalytic component of the RNA exosome complex which has 3'-&gt;5' exoribonuclease activity and participates in a multitude of cellular RNA processing and degradation events. In the cytoplasm, the RNA exosome complex is involved in general mRNA turnover and specifically degrades inherently unstable mRNAs containing AU-rich elements (AREs) within their 3' untranslated regions, and in RNA surveillance pathways, preventing translation of aberrant mRNAs. It seems to be involved in degradation of histone mRNA. The chain is DIS3-like exonuclease 1 (Dis3l) from Rattus norvegicus (Rat).